The following is a 212-amino-acid chain: Interleukin-6 (212 aa).

An N-terminal signal peptide occupies residues 1-27 (MNSVSTSAFGPVAFSLGLLLVLPAAFP). The cysteines at positions 72 and 78 are disulfide-linked. Asn73 is a glycosylation site (N-linked (GlcNAc...) asparagine). Ser81 is subject to Phosphoserine. A disulfide bridge connects residues Cys101 and Cys111. N-linked (GlcNAc...) asparagine glycosylation occurs at Asn172.

Belongs to the IL-6 superfamily. In terms of assembly, component of a hexamer of two molecules each of IL6, IL6R and IL6ST; first binds to IL6R to associate with the signaling subunit IL6ST. Interacts with IL6R (via the N-terminal ectodomain); this interaction may be affected by IL6R-binding with SORL1, hence decreasing IL6 cis signaling. Interacts with SORL1 (via the N-terminal ectodomain); this interaction leads to IL6 internalization and lysosomal degradation. May form a trimeric complex with the soluble SORL1 ectodomain and soluble IL6R receptor; this interaction might stabilize circulating IL6, hence promoting IL6 trans signaling.

Its subcellular location is the secreted. Cytokine with a wide variety of biological functions in immunity, tissue regeneration, and metabolism. Binds to IL6R, then the complex associates to the signaling subunit IL6ST/gp130 to trigger the intracellular IL6-signaling pathway. The interaction with the membrane-bound IL6R and IL6ST stimulates 'classic signaling', whereas the binding of IL6 and soluble IL6R to IL6ST stimulates 'trans-signaling'. Alternatively, 'cluster signaling' occurs when membrane-bound IL6:IL6R complexes on transmitter cells activate IL6ST receptors on neighboring receiver cells. In terms of biological role, IL6 is a potent inducer of the acute phase response. Rapid production of IL6 contributes to host defense during infection and tissue injury, but excessive IL6 synthesis is involved in disease pathology. In the innate immune response, is synthesized by myeloid cells, such as macrophages and dendritic cells, upon recognition of pathogens through toll-like receptors (TLRs) at the site of infection or tissue injury. In the adaptive immune response, is required for the differentiation of B cells into immunoglobulin-secreting cells. Plays a major role in the differentiation of CD4(+) T cell subsets. Essential factor for the development of T follicular helper (Tfh) cells that are required for the induction of germinal-center formation. Required to drive naive CD4(+) T cells to the Th17 lineage. Also required for proliferation of myeloma cells and the survival of plasmablast cells. Its function is as follows. Acts as an essential factor in bone homeostasis and on vessels directly or indirectly by induction of VEGF, resulting in increased angiogenesis activity and vascular permeability. Induces, through 'trans-signaling' and synergistically with IL1B and TNF, the production of VEGF. Involved in metabolic controls, is discharged into the bloodstream after muscle contraction increasing lipolysis and improving insulin resistance. 'Trans-signaling' in central nervous system also regulates energy and glucose homeostasis. Mediates, through GLP-1, crosstalk between insulin-sensitive tissues, intestinal L cells and pancreatic islets to adapt to changes in insulin demand. Also acts as a myokine. Plays a protective role during liver injury, being required for maintenance of tissue regeneration. Also has a pivotal role in iron metabolism by regulating HAMP/hepcidin expression upon inflammation or bacterial infection. Through activation of IL6ST-YAP-NOTCH pathway, induces inflammation-induced epithelial regeneration. The chain is Interleukin-6 (IL6) from Macaca thibetana (Pere David's macaque).